A 493-amino-acid polypeptide reads, in one-letter code: uncharacterized protein (493 aa).

8–37 (DFLVVGGGTCGCVVAARLSEDPSATVMLLE) lines the FAD pocket. His429 (proton acceptor) is an active-site residue.

It belongs to the GMC oxidoreductase family. The cofactor is FAD.

This is an uncharacterized protein from Rhodococcus erythropolis (Arthrobacter picolinophilus).